We begin with the raw amino-acid sequence, 146 residues long: Angiogenin (146 aa).

The signal sequence occupies residues 1-24 (MVMGLGLFLLVFMLGLGLTSPTLA). A Pyrrolidone carboxylic acid modification is found at Gln-25. The active-site Proton acceptor is His-37. Arg-45 lines the tRNA pocket. Disulfide bonds link Cys-50–Cys-105, Cys-63–Cys-116, and Cys-81–Cys-131. The Nucleolar localization signal signature appears at 55 to 59 (RRQGM). Cys-105 and Ile-127 together coordinate tRNA. The active-site Proton donor is the His-138.

The protein belongs to the pancreatic ribonuclease family. Homodimer. Interacts with RNH1; inhibiting ANG ribonuclease activity. Interacts with PCNA.

It localises to the secreted. The protein resides in the nucleus. The protein localises to the nucleolus. Its subcellular location is the cytoplasm. It is found in the stress granule. Its activity is regulated as follows. Has weak tRNA ribonuclease activity by itself due to partial autoinhibition by its C-terminus, which folds into a short alpha-helix that partially occludes the substrate-binding site. In absence of stress, the ribonuclease activity is inhibited by RNH1 in the cytoplasm. In response to stress, dissociates from RNH1 in the cytoplasm and associates with cytoplasmic ribosomes with vacant A-sites: ribosomes directly activate the tRNA ribonuclease activity of ANG by refolding the C-terminal alpha-helix. In response to stress, the angiogenic activity of ANG is inhibited by RNH1 in the nucleus. Its function is as follows. Secreted ribonuclease that can either promote or restrict cell proliferation of target cells, depending on the context. Endocytosed in target cells via its receptor PLXNB2 and translocates to the cytoplasm or nucleus. Under stress conditions, localizes to the cytoplasm and promotes the assembly of stress granules (SGs): specifically cleaves a subset of tRNAs within anticodon loops to produce tRNA-derived stress-induced fragments (tiRNAs), resulting in translation repression and inhibition of cell proliferation. tiRNas also prevent formation of apoptosome, thereby promoting cell survival. Preferentially cleaves RNAs between a pyrimidine and an adenosine residue, suggesting that it cleaves the anticodon loop of tRNA(Ala) (32-UUAGCAU-38) after positions 33 and 36. Cleaves a subset of tRNAs, including tRNA(Ala), tRNA(Glu), tRNA(Gly), tRNA(Lys), tRNA(Val), tRNA(His), tRNA(Asp) and tRNA(Sec). Under growth conditions and in differentiated cells, translocates to the nucleus and stimulates ribosomal RNA (rRNA) transcription, including that containing the initiation site sequences of 45S rRNA, thereby promoting cell growth and proliferation. Angiogenin induces vascularization of normal and malignant tissues via its ability to promote rRNA transcription. Involved in hematopoietic stem and progenitor cell (HSPC) growth and survival by promoting rRNA transcription in growth conditions and inhibiting translation in response to stress, respectively. Mediates the crosstalk between myeloid and intestinal epithelial cells to protect the intestinal epithelial barrier integrity: secreted by myeloid cells and promotes intestinal epithelial cells proliferation and survival. Also mediates osteoclast-endothelial cell crosstalk in growing bone: produced by osteoclasts and protects the neighboring vascular cells against senescence by promoting rRNA transcription. This is Angiogenin (ANG) from Miopithecus talapoin (Angolan talapoin).